The primary structure comprises 484 residues: TPR repeat-containing protein YvcD (484 aa).

TPR repeat units follow at residues 21–54, 55–88, and 187–220; these read GQYF…EPED, SEML…LEAE, and WSAY…NEGN.

The polypeptide is TPR repeat-containing protein YvcD (yvcD) (Bacillus subtilis (strain 168)).